Consider the following 948-residue polypeptide: RNA polymerase-associated protein RapA (948 aa).

Residues Glu-164 to Asn-332 enclose the Helicase ATP-binding domain. Residue Asp-177 to Thr-184 participates in ATP binding. A DEAH box motif is present at residues Asp-278–His-281. One can recognise a Helicase C-terminal domain in the interval Arg-473–His-627.

It belongs to the SNF2/RAD54 helicase family. RapA subfamily. In terms of assembly, interacts with the RNAP. Has a higher affinity for the core RNAP than for the holoenzyme. Its ATPase activity is stimulated by binding to RNAP.

Functionally, transcription regulator that activates transcription by stimulating RNA polymerase (RNAP) recycling in case of stress conditions such as supercoiled DNA or high salt concentrations. Probably acts by releasing the RNAP, when it is trapped or immobilized on tightly supercoiled DNA. Does not activate transcription on linear DNA. Probably not involved in DNA repair. The protein is RNA polymerase-associated protein RapA of Pseudomonas putida (strain ATCC 700007 / DSM 6899 / JCM 31910 / BCRC 17059 / LMG 24140 / F1).